The chain runs to 163 residues: ATP synthase subunit delta, chloroplastic (163 aa).

The protein belongs to the ATPase delta chain family. In terms of assembly, F-type ATPases have 2 components, F(1) - the catalytic core - and F(0) - the membrane proton channel. F(1) has five subunits: alpha(3), beta(3), gamma(1), delta(1), epsilon(1). CF(0) has four main subunits: a(1), b(1), b'(1) and c(10-14). The alpha and beta chains form an alternating ring which encloses part of the gamma chain. F(1) is attached to F(0) by a central stalk formed by the gamma and epsilon chains, while a peripheral stalk is formed by the delta, b and b' chains.

It is found in the plastid. The protein resides in the chloroplast thylakoid membrane. Its function is as follows. F(1)F(0) ATP synthase produces ATP from ADP in the presence of a proton or sodium gradient. F-type ATPases consist of two structural domains, F(1) containing the extramembraneous catalytic core and F(0) containing the membrane proton channel, linked together by a central stalk and a peripheral stalk. During catalysis, ATP synthesis in the catalytic domain of F(1) is coupled via a rotary mechanism of the central stalk subunits to proton translocation. Functionally, this protein is part of the stalk that links CF(0) to CF(1). It either transmits conformational changes from CF(0) to CF(1) or is implicated in proton conduction. The polypeptide is ATP synthase subunit delta, chloroplastic (Cyanidioschyzon merolae (strain NIES-3377 / 10D) (Unicellular red alga)).